The sequence spans 420 residues: Argininosuccinate synthase (420 aa).

ATP contacts are provided by residues 9–17 (AYSGGLDTS) and A35. Positions 86 and 91 each coordinate L-citrulline. 114 to 122 (SHGCTGKGN) is an ATP binding site. L-aspartate contacts are provided by T118, N122, and D123. N122 provides a ligand contact to L-citrulline. 5 residues coordinate L-citrulline: R126, S179, S188, E273, and Y285.

This sequence belongs to the argininosuccinate synthase family. Type 1 subfamily. As to quaternary structure, homotetramer.

The protein resides in the cytoplasm. The catalysed reaction is L-citrulline + L-aspartate + ATP = 2-(N(omega)-L-arginino)succinate + AMP + diphosphate + H(+). It functions in the pathway amino-acid biosynthesis; L-arginine biosynthesis; L-arginine from L-ornithine and carbamoyl phosphate: step 2/3. Catalyzes the eighth step in arginine biosynthesis. Also has a catabolic function as the first enzyme of citrulline utilization as nitrogen source via arginine and the reactions involved in the arginase pathway. The sequence is that of Argininosuccinate synthase (ARG1) from Saccharomyces cerevisiae (strain ATCC 204508 / S288c) (Baker's yeast).